The following is a 764-amino-acid chain: 5-methyltetrahydropteroyltriglutamate--homocysteine methyltransferase (764 aa).

5-methyltetrahydropteroyltri-L-glutamate is bound by residues 16–19 (RELK) and K115. Residues 435–437 (IGS) and E488 each bind L-homocysteine. L-methionine is bound by residues 435 to 437 (IGS) and E488. 5-methyltetrahydropteroyltri-L-glutamate contacts are provided by residues 519–520 (RC) and W565. L-homocysteine is bound at residue D603. D603 contacts L-methionine. E609 is a 5-methyltetrahydropteroyltri-L-glutamate binding site. Residues H645, C647, and E669 each coordinate Zn(2+). H698 functions as the Proton donor in the catalytic mechanism. Zn(2+) is bound at residue C730.

Belongs to the vitamin-B12 independent methionine synthase family. The cofactor is Zn(2+).

The catalysed reaction is 5-methyltetrahydropteroyltri-L-glutamate + L-homocysteine = tetrahydropteroyltri-L-glutamate + L-methionine. Its pathway is amino-acid biosynthesis; L-methionine biosynthesis via de novo pathway; L-methionine from L-homocysteine (MetE route): step 1/1. Its function is as follows. Catalyzes the transfer of a methyl group from 5-methyltetrahydrofolate to homocysteine resulting in methionine formation. In Burkholderia pseudomallei (strain 1106a), this protein is 5-methyltetrahydropteroyltriglutamate--homocysteine methyltransferase.